The primary structure comprises 129 residues: Small ribosomal subunit protein uS8 (129 aa).

The protein belongs to the universal ribosomal protein uS8 family. As to quaternary structure, part of the 30S ribosomal subunit. Contacts proteins S5 and S12.

Functionally, one of the primary rRNA binding proteins, it binds directly to 16S rRNA central domain where it helps coordinate assembly of the platform of the 30S subunit. The sequence is that of Small ribosomal subunit protein uS8 from Mycoplasma capricolum subsp. capricolum (strain California kid / ATCC 27343 / NCTC 10154).